Here is a 623-residue protein sequence, read N- to C-terminus: Riboflavin biosynthesis protein PYRR, chloroplastic (623 aa).

The transit peptide at 1 to 45 (MPLPQPLLGGASPAPARAASSFLHPLLHTRHRVSTAPAAASSFVP) directs the protein to the chloroplast. The 130-residue stretch at 52–181 (ANDAMLLRRA…ALRNEGIQVD (130 aa)) folds into the CMP/dCMP-type deaminase domain.

It in the C-terminal section; belongs to the YbiA family.

The protein localises to the plastid. Its subcellular location is the chloroplast. It carries out the reaction 5-amino-6-(5-phospho-D-ribitylamino)uracil + NADP(+) = 5-amino-6-(5-phospho-D-ribosylamino)uracil + NADPH + H(+). The catalysed reaction is 2,5-diamino-6-hydroxy-4-(5-phosphoribosylamino)-pyrimidine + H2O = 2,5,6-triamino-4-hydroxypyrimidine + D-ribose 5-phosphate. It catalyses the reaction 5-amino-6-(5-phospho-D-ribosylamino)uracil + H2O = 5,6-diaminouracil + D-ribose 5-phosphate. It participates in cofactor biosynthesis; riboflavin biosynthesis; 5-amino-6-(D-ribitylamino)uracil from GTP: step 3/4. In terms of biological role, pyrimidine reductase involved in the riboflavin biosynthesis pathway. Also has a non-functional N-terminal deaminase domain that lacks the catalytically essential zinc-binding residues. 39% activity when NADH replaces NADPH. No evidence for a phosphatase activity conferred by the N-terminal domain. Functionally, catalyzes the hydrolysis of the N-glycosidic bond in the first two intermediates of riboflavin biosynthesis, which are highly reactive metabolites, yielding relatively innocuous products. Thus, can divert a surplus of harmful intermediates into relatively harmless products and pre-empt the damage these intermediates would otherwise do. Has no activity against GTP, nucleoside monophosphates or ADP-ribose. In Zea mays (Maize), this protein is Riboflavin biosynthesis protein PYRR, chloroplastic (PYRR).